A 287-amino-acid chain; its full sequence is Isopentenyl-diphosphate Delta-isomerase I (287 aa).

Positions 105-257 constitute a Nudix hydrolase domain; sequence LLHRAFSVFL…GVKLSPWFRL (153 aa). Residues cysteine 142 and tyrosine 207 contribute to the active site.

This sequence belongs to the IPP isomerase type 1 family.

The enzyme catalyses isopentenyl diphosphate = dimethylallyl diphosphate. Its pathway is isoprenoid biosynthesis; dimethylallyl diphosphate biosynthesis; dimethylallyl diphosphate from isopentenyl diphosphate: step 1/1. It functions in the pathway porphyrin-containing compound metabolism; chlorophyll biosynthesis. Functionally, catalyzes the 1,3-allylic rearrangement of the homoallylic substrate isopentenyl (IPP) to its highly electrophilic allylic isomer, dimethylallyl diphosphate (DMAPP). The chain is Isopentenyl-diphosphate Delta-isomerase I (IPI1) from Clarkia breweri (Fairy fans).